The sequence spans 501 residues: ATP synthase subunit alpha (501 aa).

169–176 provides a ligand contact to ATP; that stretch reads GDRQTGKT.

It belongs to the ATPase alpha/beta chains family. As to quaternary structure, F-type ATPases have 2 components, CF(1) - the catalytic core - and CF(0) - the membrane proton channel. CF(1) has five subunits: alpha(3), beta(3), gamma(1), delta(1), epsilon(1). CF(0) has three main subunits: a(1), b(2) and c(9-12). The alpha and beta chains form an alternating ring which encloses part of the gamma chain. CF(1) is attached to CF(0) by a central stalk formed by the gamma and epsilon chains, while a peripheral stalk is formed by the delta and b chains.

The protein resides in the cell membrane. It carries out the reaction ATP + H2O + 4 H(+)(in) = ADP + phosphate + 5 H(+)(out). Functionally, produces ATP from ADP in the presence of a proton gradient across the membrane. The alpha chain is a regulatory subunit. The chain is ATP synthase subunit alpha from Streptococcus pneumoniae serotype 19F (strain G54).